A 40-amino-acid chain; its full sequence is Large ribosomal subunit protein bL36 (40 aa).

This sequence belongs to the bacterial ribosomal protein bL36 family.

This Corynebacterium jeikeium (strain K411) protein is Large ribosomal subunit protein bL36.